The sequence spans 345 residues: Succinylglutamate desuccinylase (345 aa).

Residues H63, E66, and H160 each contribute to the Zn(2+) site. E224 is an active-site residue.

This sequence belongs to the AspA/AstE family. Succinylglutamate desuccinylase subfamily. It depends on Zn(2+) as a cofactor.

It carries out the reaction N-succinyl-L-glutamate + H2O = L-glutamate + succinate. Its pathway is amino-acid degradation; L-arginine degradation via AST pathway; L-glutamate and succinate from L-arginine: step 5/5. Transforms N(2)-succinylglutamate into succinate and glutamate. The protein is Succinylglutamate desuccinylase of Shewanella woodyi (strain ATCC 51908 / MS32).